The chain runs to 486 residues: Ribulose bisphosphate carboxylase large chain 1 (486 aa).

Substrate is bound by residues asparagine 125 and threonine 175. Lysine 177 functions as the Proton acceptor in the catalytic mechanism. Lysine 179 contacts substrate. Residues lysine 203, aspartate 205, and glutamate 206 each coordinate Mg(2+). Lysine 203 is subject to N6-carboxylysine. Histidine 295 acts as the Proton acceptor in catalysis. Residues arginine 296, histidine 328, and serine 380 each coordinate substrate.

Belongs to the RuBisCO large chain family. Type I subfamily. In terms of assembly, heterohexadecamer of 8 large chains and 8 small chains. It depends on Mg(2+) as a cofactor.

It carries out the reaction 2 (2R)-3-phosphoglycerate + 2 H(+) = D-ribulose 1,5-bisphosphate + CO2 + H2O. It catalyses the reaction D-ribulose 1,5-bisphosphate + O2 = 2-phosphoglycolate + (2R)-3-phosphoglycerate + 2 H(+). In terms of biological role, ruBisCO catalyzes two reactions: the carboxylation of D-ribulose 1,5-bisphosphate, the primary event in carbon dioxide fixation, as well as the oxidative fragmentation of the pentose substrate. Both reactions occur simultaneously and in competition at the same active site. In Cereibacter sphaeroides (strain ATCC 17025 / ATH 2.4.3) (Rhodobacter sphaeroides), this protein is Ribulose bisphosphate carboxylase large chain 1.